The primary structure comprises 469 residues: Uronate isomerase (469 aa).

Belongs to the metallo-dependent hydrolases superfamily. Uronate isomerase family.

It carries out the reaction D-glucuronate = D-fructuronate. The catalysed reaction is aldehydo-D-galacturonate = keto-D-tagaturonate. The protein operates within carbohydrate metabolism; pentose and glucuronate interconversion. This chain is Uronate isomerase, found in Edwardsiella ictaluri (strain 93-146).